A 162-amino-acid chain; its full sequence is 2-C-methyl-D-erythritol 2,4-cyclodiphosphate synthase (162 aa).

Positions 12 and 14 each coordinate a divalent metal cation. Residues 12–14 (DVH) and 38–39 (HS) each bind 4-CDP-2-C-methyl-D-erythritol 2-phosphate. His46 is a binding site for a divalent metal cation. Residues 60 to 62 (DIG), 65 to 69 (FPDTD), and Arg146 contribute to the 4-CDP-2-C-methyl-D-erythritol 2-phosphate site.

The protein belongs to the IspF family. In terms of assembly, homotrimer. The cofactor is a divalent metal cation.

It catalyses the reaction 4-CDP-2-C-methyl-D-erythritol 2-phosphate = 2-C-methyl-D-erythritol 2,4-cyclic diphosphate + CMP. Its pathway is isoprenoid biosynthesis; isopentenyl diphosphate biosynthesis via DXP pathway; isopentenyl diphosphate from 1-deoxy-D-xylulose 5-phosphate: step 4/6. In terms of biological role, involved in the biosynthesis of isopentenyl diphosphate (IPP) and dimethylallyl diphosphate (DMAPP), two major building blocks of isoprenoid compounds. Catalyzes the conversion of 4-diphosphocytidyl-2-C-methyl-D-erythritol 2-phosphate (CDP-ME2P) to 2-C-methyl-D-erythritol 2,4-cyclodiphosphate (ME-CPP) with a corresponding release of cytidine 5-monophosphate (CMP). This Bordetella parapertussis (strain 12822 / ATCC BAA-587 / NCTC 13253) protein is 2-C-methyl-D-erythritol 2,4-cyclodiphosphate synthase.